We begin with the raw amino-acid sequence, 199 residues long: Probable NADH dehydrogenase [ubiquinone] iron-sulfur protein 7, mitochondrial (199 aa).

A mitochondrion-targeting transit peptide spans 1–16 (MLSALRTAGALSTRRL). [4Fe-4S] cluster-binding residues include C74, C75, C139, and C169.

The protein belongs to the complex I 20 kDa subunit family. In terms of assembly, complex I is composed of 45 different subunits This is a component of the iron-sulfur (IP) fragment of the enzyme. Requires [4Fe-4S] cluster as cofactor.

It localises to the mitochondrion. The enzyme catalyses a ubiquinone + NADH + 5 H(+)(in) = a ubiquinol + NAD(+) + 4 H(+)(out). Core subunit of the mitochondrial membrane respiratory chain NADH dehydrogenase (Complex I) that is believed to belong to the minimal assembly required for catalysis. Complex I functions in the transfer of electrons from NADH to the respiratory chain. The immediate electron acceptor for the enzyme is believed to be ubiquinone. The chain is Probable NADH dehydrogenase [ubiquinone] iron-sulfur protein 7, mitochondrial from Caenorhabditis briggsae.